The following is a 638-amino-acid chain: Chaperone protein HtpG (638 aa).

An a; substrate-binding region spans residues 1 to 345; it reads MTTETFEFQV…AQDLSLNVSR (345 aa). The b stretch occupies residues 346 to 560; that stretch reads EILQQDRHIR…AGELTPALEN (215 aa). The interval 561 to 638 is c; sequence MYRAMGQEVP…LMADRLERTL (78 aa).

It belongs to the heat shock protein 90 family. In terms of assembly, homodimer.

It localises to the cytoplasm. In terms of biological role, molecular chaperone. Has ATPase activity. This is Chaperone protein HtpG from Streptomyces coelicolor (strain ATCC BAA-471 / A3(2) / M145).